We begin with the raw amino-acid sequence, 361 residues long: Chitinase-3-like protein 1 (361 aa).

A GH18 domain is found at 1–361; it reads YKLICYYTSW…SAVKDVLAEV (361 aa). Cysteines 5 and 30 form a disulfide. N39 carries an N-linked (GlcNAc...) asparagine glycan. Chitin is bound by residues 49 to 50, 76 to 79, Y120, 183 to 186, and R241; these read EW, GGWN, and LTYD. C278 and C342 are oxidised to a cystine. Residues 302–316 form an important for AKT1 activation and IL8 production region; sequence QWVAYDDQESVKNKA. Residue W330 participates in chitin binding. N345 carries N-linked (GlcNAc...) asparagine glycosylation.

Belongs to the glycosyl hydrolase 18 family. As to quaternary structure, monomer. Detected in mammary gland.

The protein localises to the secreted. The protein resides in the extracellular space. Its subcellular location is the cytoplasm. It is found in the perinuclear region. It localises to the endoplasmic reticulum. Functionally, carbohydrate-binding lectin with a preference for chitin. Has no chitinase activity. May play a role in tissue remodeling and in the capacity of cells to respond to and cope with changes in their environment. Plays a role in T-helper cell type 2 (Th2) inflammatory response and IL-13-induced inflammation, regulating allergen sensitization, inflammatory cell apoptosis, dendritic cell accumulation and M2 macrophage differentiation. Facilitates invasion of pathogenic enteric bacteria into colonic mucosa and lymphoid organs. Mediates activation of AKT1 signaling pathway and subsequent IL8 production in colonic epithelial cells. Regulates antibacterial responses in lung by contributing to macrophage bacterial killing, controlling bacterial dissemination and augmenting host tolerance. Also regulates hyperoxia-induced injury, inflammation and epithelial apoptosis in lung. This Ovis aries (Sheep) protein is Chitinase-3-like protein 1 (CHI3L1).